A 347-amino-acid polypeptide reads, in one-letter code: Protein RecA (347 aa).

64 to 71 (GPESSGKT) contacts ATP.

This sequence belongs to the RecA family.

The protein localises to the cytoplasm. Can catalyze the hydrolysis of ATP in the presence of single-stranded DNA, the ATP-dependent uptake of single-stranded DNA by duplex DNA, and the ATP-dependent hybridization of homologous single-stranded DNAs. It interacts with LexA causing its activation and leading to its autocatalytic cleavage. This Bartonella quintana (strain Toulouse) (Rochalimaea quintana) protein is Protein RecA.